The following is a 130-amino-acid chain: Transcription antitermination protein NusB (130 aa).

The protein belongs to the NusB family.

Its function is as follows. Involved in transcription antitermination. Required for transcription of ribosomal RNA (rRNA) genes. Binds specifically to the boxA antiterminator sequence of the ribosomal RNA (rrn) operons. The chain is Transcription antitermination protein NusB from Macrococcus caseolyticus (strain JCSC5402) (Macrococcoides caseolyticum).